The chain runs to 643 residues: Arginine--tRNA ligase, mitochondrial (643 aa).

Residues 188–198 (PNIAKPFHAGH) carry the 'HIGH' region motif.

Belongs to the class-I aminoacyl-tRNA synthetase family.

The protein localises to the mitochondrion matrix. The enzyme catalyses tRNA(Arg) + L-arginine + ATP = L-arginyl-tRNA(Arg) + AMP + diphosphate. The sequence is that of Arginine--tRNA ligase, mitochondrial (MSR1) from Saccharomyces cerevisiae (strain ATCC 204508 / S288c) (Baker's yeast).